A 290-amino-acid polypeptide reads, in one-letter code: tRNA-cytidine(32) 2-sulfurtransferase (290 aa).

Positions Ser66–Ser71 match the PP-loop motif motif. [4Fe-4S] cluster is bound by residues Cys141, Cys144, and Cys232.

It belongs to the TtcA family. In terms of assembly, homodimer. The cofactor is Mg(2+). [4Fe-4S] cluster serves as cofactor.

The protein resides in the cytoplasm. It catalyses the reaction cytidine(32) in tRNA + S-sulfanyl-L-cysteinyl-[cysteine desulfurase] + AH2 + ATP = 2-thiocytidine(32) in tRNA + L-cysteinyl-[cysteine desulfurase] + A + AMP + diphosphate + H(+). The protein operates within tRNA modification. Functionally, catalyzes the ATP-dependent 2-thiolation of cytidine in position 32 of tRNA, to form 2-thiocytidine (s(2)C32). The sulfur atoms are provided by the cysteine/cysteine desulfurase (IscS) system. This Rhizobium etli (strain ATCC 51251 / DSM 11541 / JCM 21823 / NBRC 15573 / CFN 42) protein is tRNA-cytidine(32) 2-sulfurtransferase.